The following is a 130-amino-acid chain: Flagellar assembly factor FliW (130 aa).

It belongs to the FliW family. Interacts with translational regulator CsrA and flagellin(s).

The protein resides in the cytoplasm. Functionally, acts as an anti-CsrA protein, binds CsrA and prevents it from repressing translation of its target genes, one of which is flagellin. Binds to flagellin and participates in the assembly of the flagellum. This Borrelia turicatae (strain 91E135) protein is Flagellar assembly factor FliW.